The following is a 156-amino-acid chain: RNA polymerase sigma factor SigS (156 aa).

The Polymerase core binding signature appears at 29–44; the sequence is EYYQLLLIKMWQLSQI. The segment at residues 126-145 is a DNA-binding region (H-T-H motif); the sequence is QFEIAEIMSLSLSTIKLIKM.

Belongs to the sigma-70 factor family.

Its function is as follows. Sigma factors are initiation factors that promote the attachment of RNA polymerase to specific initiation sites and are then released. Sigma-S contributes to the protection against external stress, thus playing a role in cellular fitness and survival. This is RNA polymerase sigma factor SigS (sigS) from Staphylococcus aureus (strain COL).